The following is a 335-amino-acid chain: Fructose-1,6-bisphosphatase class 1 (335 aa).

4 residues coordinate Mg(2+): Glu90, Asp113, Leu115, and Asp116. Substrate contacts are provided by residues 116–119 (DGSS), Asn209, Tyr242, and Lys272. Glu278 is a binding site for Mg(2+).

This sequence belongs to the FBPase class 1 family. As to quaternary structure, homotetramer. Requires Mg(2+) as cofactor.

The protein localises to the cytoplasm. It catalyses the reaction beta-D-fructose 1,6-bisphosphate + H2O = beta-D-fructose 6-phosphate + phosphate. It functions in the pathway carbohydrate biosynthesis; gluconeogenesis. The polypeptide is Fructose-1,6-bisphosphatase class 1 (Mannheimia succiniciproducens (strain KCTC 0769BP / MBEL55E)).